The chain runs to 146 residues: Putative calcium-binding protein CML19 (146 aa).

4 consecutive EF-hand domains span residues Ala3–Glu38, Met40–Gly75, Glu79–His114, and Gln115–Ala146. Ca(2+) is bound by residues Asp16, Asp18, Asp20, Lys22, Glu27, Asp53, Asp55, Asp57, and Glu64. The Ca(2+) site is built by Asp128, Asp130, Asp132, and Glu139.

Its function is as follows. Potential calcium sensor. The chain is Putative calcium-binding protein CML19 (CML19) from Oryza sativa subsp. japonica (Rice).